Reading from the N-terminus, the 147-residue chain is Ribonuclease 4 (147 aa).

An N-terminal signal peptide occupies residues 1–28; the sequence is MALQRTHSLLLLLLLTLLGLGLVQPSYG. Position 29 is a pyrrolidone carboxylic acid (Q29). R35, H40, K68, N71, and T72 together coordinate dUMP. Residue H40 is the Proton acceptor of the active site. Cystine bridges form between C53–C109, C67–C120, C85–C135, and C92–C99. H144 serves as the catalytic Proton donor. F145 is a binding site for dUMP.

The protein belongs to the pancreatic ribonuclease family. In terms of tissue distribution, expressed in the cortical and medullary tubules of the kidney, and in the transitional epithelium of the urinary bladder (at protein level).

The protein localises to the secreted. In terms of biological role, cleaves preferentially after uridine bases. Has antimicrobial activity against uropathogenic E.coli (UPEC). Probably contributes to urinary tract sterility. The protein is Ribonuclease 4 (RNASE4) of Homo sapiens (Human).